The following is a 641-amino-acid chain: Ribosomal oxygenase 1 (641 aa).

N-acetylmethionine is present on methionine 1. 2 disordered regions span residues 1-35 (MDGL…LPLR) and 54-80 (RTQT…DALP). Positions 12-23 (RRGRPKRRRKPQ) are enriched in basic residues. 3 positions are modified to phosphoserine: serine 60, serine 63, and serine 109. Residues 294–439 (CSLRLLCPQA…DFLEAILPLA (146 aa)) enclose the JmjC domain. Fe cation is bound by residues histidine 340, aspartate 342, and histidine 405.

Belongs to the ROX family. NO66 subfamily. In terms of assembly, interacts with SP7/OSX; the interaction is direct. Interacts with MYC. Interacts with PHF19; leading to its recruitment to H3K36me3 sites. It depends on Fe(2+) as a cofactor. As to expression, widely expressed. Overexpressed in lung carcinomas.

The protein localises to the nucleus. The protein resides in the nucleolus. Its subcellular location is the nucleoplasm. The catalysed reaction is N(6),N(6)-dimethyl-L-lysyl(36)-[histone H3] + 2 2-oxoglutarate + 2 O2 = L-lysyl(36)-[histone H3] + 2 formaldehyde + 2 succinate + 2 CO2. It catalyses the reaction N(6)-methyl-L-lysyl-[protein] + 2-oxoglutarate + O2 = L-lysyl-[protein] + formaldehyde + succinate + CO2. The enzyme catalyses L-histidyl-[protein] + 2-oxoglutarate + O2 = (3S)-3-hydroxy-L-histidyl-[protein] + succinate + CO2. Functionally, oxygenase that can act as both a histone lysine demethylase and a ribosomal histidine hydroxylase. Specifically demethylates 'Lys-4' (H3K4me) and 'Lys-36' (H3K36me) of histone H3, thereby playing a central role in histone code. Preferentially demethylates trimethylated H3 'Lys-4' (H3K4me3) and monomethylated H3 'Lys-4' (H3K4me1) residues, while it has weaker activity for dimethylated H3 'Lys-36' (H3K36me2). Acts as a regulator of osteoblast differentiation via its interaction with SP7/OSX by demethylating H3K4me and H3K36me, thereby inhibiting SP7/OSX-mediated promoter activation. Also catalyzes demethylation of non-histone proteins, such as CGAS: demethylation of monomethylated CGAS promotes interaction between CGAS and PARP1, followed by PARP1 inactivation. Also catalyzes the hydroxylation of 60S ribosomal protein L8 on 'His-216', thereby playing a role in ribosome biogenesis. Participates in MYC-induced transcriptional activation. The polypeptide is Ribosomal oxygenase 1 (Homo sapiens (Human)).